The primary structure comprises 1006 residues: 5'-3' exoribonuclease 2 (1006 aa).

Coiled-coil stretches lie at residues 256–287 (FAQD…NSEQ) and 453–544 (RLKK…AESE). A required for retention in the nucleus region spans residues 492–529 (DDAVSKANKTNFNLAEVMKQKIINKKHRLEKDNEEEEI). Basic and acidic residues predominate over residues 561–575 (DRENSETTEVSRDSP). Disordered regions lie at residues 561-584 (DREN…NVSE) and 939-1006 (HNYG…ANRR). Residue Ser574 is modified to Phosphoserine. The span at 939-956 (HNYGRNSYNSQPGFNNSR) shows a compositional bias: polar residues. 6 tandem repeats follow at residues 955–958 (SRYD), 961–964 (NNNY), 972–974 (NNN), 975–978 (YSGN), 984–986 (YSG), and 996–999 (SRYD). The tract at residues 955-999 (SRYDGGNNNYRQNSNYRNNNYSGNRNSGQYSGNSYSRNNKQSRYD) is 2 X 4 AA repeats of S-R-Y-D, N-N-N-Y, Y-S-G-N. Residues 959-993 (GGNNNYRQNSNYRNNNYSGNRNSGQYSGNSYSRNN) are compositionally biased toward low complexity. Over residues 996-1006 (SRYDNSRANRR) the composition is skewed to basic and acidic residues.

It belongs to the 5'-3' exonuclease family. XRN2/RAT1 subfamily. In terms of assembly, interacts with RAI1 and RTT103. Mg(2+) is required as a cofactor. It depends on Mn(2+) as a cofactor.

The protein resides in the nucleus. With respect to regulation, inhibited by nucleoside 3', 5'-bisphosphates. Possesses 5'-&gt;3' exoribonuclease activity. Required for the processing of nuclear mRNA, rRNA and small nucleolar RNA (snoRNA) precursors. May promote termination of transcription by RNA polymerase II via the recruitment of 3'-end processing factors to the poly(A) site and by the degradation of nascent RNA downstream of the poly(A) site. This chain is 5'-3' exoribonuclease 2 (RAT1), found in Saccharomyces cerevisiae (strain ATCC 204508 / S288c) (Baker's yeast).